A 250-amino-acid polypeptide reads, in one-letter code: Ubiquinone/menaquinone biosynthesis C-methyltransferase UbiE (250 aa).

S-adenosyl-L-methionine is bound by residues threonine 74, aspartate 94, 122-123 (DA), and serine 139.

This sequence belongs to the class I-like SAM-binding methyltransferase superfamily. MenG/UbiE family.

The catalysed reaction is a 2-demethylmenaquinol + S-adenosyl-L-methionine = a menaquinol + S-adenosyl-L-homocysteine + H(+). It catalyses the reaction a 2-methoxy-6-(all-trans-polyprenyl)benzene-1,4-diol + S-adenosyl-L-methionine = a 5-methoxy-2-methyl-3-(all-trans-polyprenyl)benzene-1,4-diol + S-adenosyl-L-homocysteine + H(+). It participates in quinol/quinone metabolism; menaquinone biosynthesis; menaquinol from 1,4-dihydroxy-2-naphthoate: step 2/2. Its pathway is cofactor biosynthesis; ubiquinone biosynthesis. In terms of biological role, methyltransferase required for the conversion of demethylmenaquinol (DMKH2) to menaquinol (MKH2) and the conversion of 2-polyprenyl-6-methoxy-1,4-benzoquinol (DDMQH2) to 2-polyprenyl-3-methyl-6-methoxy-1,4-benzoquinol (DMQH2). This chain is Ubiquinone/menaquinone biosynthesis C-methyltransferase UbiE, found in Dinoroseobacter shibae (strain DSM 16493 / NCIMB 14021 / DFL 12).